The following is a 1959-amino-acid chain: Myosin-9 (1959 aa).

Residues 27-77 form the Myosin N-terminal SH3-like domain; sequence AAKKLVWVPSEKSGFEAASLKEEVGDEAIVELAENGKKVKVNKDDIQKMNP. One can recognise a Myosin motor domain in the interval 81 to 776; the sequence is SKVEDMAELT…VLAHLEEERD (696 aa). 174–181 provides a ligand contact to ATP; the sequence is GESGAGKT. Residues 654 to 676 form an actin-binding region; that stretch reads LAKLMATLRNTNPNFVRCIIPNH. Residues 779-808 form the IQ domain; sequence ITDVIIGFQACCRGYLARKAFAKRQQQLTA. A coiled-coil region spans residues 837 to 1925; the sequence is LLQVSRQEEE…LKSKLRRGDL (1089 aa). Disordered regions lie at residues 1118–1168, 1694–1717, 1879–1917, and 1936–1959; these read EDLE…REQE, RAKRQAQQERDELADEIANSSGKG, LEEAEEEAQRANVRRKLQRELDDATETADAMNREVSSLK, and KGTGECSDEEVDGKAEAGDAKATE. 2 stretches are compositionally biased toward basic and acidic residues: residues 1122–1148 and 1694–1704; these read SERASRNKAEKQKRDLGEELEALKTEL and RAKRQAQQERD. The span at 1947 to 1959 shows a compositional bias: basic and acidic residues; the sequence is DGKAEAGDAKATE.

This sequence belongs to the TRAFAC class myosin-kinesin ATPase superfamily. Myosin family. As to quaternary structure, myosin is a hexameric protein that consists of 2 heavy chain subunits (MHC), 2 alkali light chain subunits (MLC) and 2 regulatory light chain subunits (MLC-2). In terms of tissue distribution, expressed in fibroblasts, brain, lung, kidney, spleen, and skeletal, cardiac and smooth muscles.

It localises to the cytoplasm. It is found in the cytoskeleton. The protein localises to the cell cortex. Its subcellular location is the cytoplasmic vesicle. The protein resides in the secretory vesicle. It localises to the cortical granule. Cellular myosin that appears to play a role in cytokinesis, cell shape, and specialized functions such as secretion and capping. This chain is Myosin-9 (MYH9), found in Gallus gallus (Chicken).